The following is a 517-amino-acid chain: Endoglycoceramidase (517 aa).

The first 17 residues, 1 to 17, serve as a signal peptide directing secretion; sequence MISVALIILFLAKVISG. Residue Asn99 is glycosylated (N-linked (GlcNAc...) asparagine). Glu230 functions as the Proton donor in the catalytic mechanism. 3 N-linked (GlcNAc...) asparagine glycosylation sites follow: Asn298, Asn380, and Asn393.

This sequence belongs to the glycosyl hydrolase 5 (cellulase A) family. As to expression, expressed uniformly in digestive cells, tentacles and peduncle regions suggesting expression in the endoderm throughout the whole body (at protein level).

It localises to the secreted. It catalyses the reaction an oligoglycosyl-(1-&gt;4)-beta-D-glucosyl-(1&lt;-&gt;1)-ceramide + H2O = an oligoglycosyl-(1-&gt;4)-D-glucose + an N-acyl-sphingoid base. With respect to regulation, cu(2+), zinc, manganese, calcium, magnesium and EDTA have no significant effects on enzyme activity. Enzyme requires presence of detergents such as Triton X-100 and Lubrol PX for the hydrolysis of glycosphingolipids. Taurodeoxycholate strongly inhibits the enzyme activity. In terms of biological role, hydrolysis of the glycosidic linkage between oligosaccharides and ceramides of glycosphingolipids, optimal substrates appear to be the glycosphingolipids with a gangliotetraose structure. The chain is Endoglycoceramidase from Hydra vulgaris (Hydra).